The sequence spans 346 residues: UDP-N-acetylenolpyruvoylglucosamine reductase (346 aa).

The FAD-binding PCMH-type domain maps to 18-189 (LRAQARAFIA…VSVVFALKTH (172 aa)). Arginine 165 is an active-site residue. Serine 240 functions as the Proton donor in the catalytic mechanism. Residue glutamate 336 is part of the active site.

Belongs to the MurB family. It depends on FAD as a cofactor.

The protein localises to the cytoplasm. The catalysed reaction is UDP-N-acetyl-alpha-D-muramate + NADP(+) = UDP-N-acetyl-3-O-(1-carboxyvinyl)-alpha-D-glucosamine + NADPH + H(+). The protein operates within cell wall biogenesis; peptidoglycan biosynthesis. Cell wall formation. The chain is UDP-N-acetylenolpyruvoylglucosamine reductase from Neisseria meningitidis serogroup B (strain ATCC BAA-335 / MC58).